The primary structure comprises 602 residues: Probable beta-glucosidase btgE (602 aa).

The signal sequence occupies residues 1 to 18; that stretch reads MRGAFLAAAAAVAGTAMA. 2 disordered regions span residues 61–94 and 116–166; these read PPTL…SVVT and GVDA…TSFS. Over residues 74-94 the composition is skewed to low complexity; that stretch reads PSSSSSSEVPSVPSSESSVVT. Positions 152-166 are enriched in polar residues; the sequence is TSESPLPTPGVTSFS. Glutamate 443 serves as the catalytic Proton donor. Catalysis depends on glutamate 538, which acts as the Nucleophile.

It belongs to the glycosyl hydrolase 17 family.

It localises to the secreted. It is found in the cell wall. It carries out the reaction Hydrolysis of terminal, non-reducing beta-D-glucosyl residues with release of beta-D-glucose.. Its pathway is glycan metabolism; cellulose degradation. In terms of biological role, beta-glucosidases are one of a number of cellulolytic enzymes involved in the degradation of cellulosic biomass. Catalyzes the last step releasing glucose from the inhibitory cellobiose. This is Probable beta-glucosidase btgE (btgE) from Aspergillus flavus (strain ATCC 200026 / FGSC A1120 / IAM 13836 / NRRL 3357 / JCM 12722 / SRRC 167).